The primary structure comprises 839 residues: A disintegrin and metalloproteinase with thrombospondin motifs 4 (839 aa).

The N-terminal stretch at 1 to 51 is a signal peptide; the sequence is MSHMDSHPGRGLADGWLWGIQPRLLLPTVPVSGSRLVWLLLLASLLPSAWP. A propeptide spanning residues 52–212 is cleaved from the precursor; that stretch reads ASPLPREEEI…PSPSPRRAKR (161 aa). Residue Asn-68 is glycosylated (N-linked (GlcNAc...) asparagine). The interval 166–209 is disordered; the sequence is EGGAPNSAGGPGAHILRRKSPVSGQGPMCNVKAPPGKPSPSPRR. The short motif at 192–199 is the Cysteine switch element; it reads PMCNVKAP. Cys-194 contributes to the Zn(2+) binding site. The 211-residue stretch at 218–428 folds into the Peptidase M12B domain; sequence RFVETLVVAD…GFGHCLLDKP (211 aa). Disulfide bonds link Cys-293/Cys-345, Cys-322/Cys-327, Cys-339/Cys-423, Cys-377/Cys-407, Cys-449/Cys-472, Cys-460/Cys-482, Cys-467/Cys-501, Cys-495/Cys-506, Cys-532/Cys-569, Cys-536/Cys-574, and Cys-547/Cys-559. His-361 is a Zn(2+) binding site. Residue Glu-362 is part of the active site. Positions 365 and 371 each coordinate Zn(2+). The Disintegrin domain maps to 437–519; that stretch reads TFPGKDYDAD…DQLQAFNVPQ (83 aa). A TSP type-1 domain is found at 520–575; it reads AGGWGPWGSWGDCSRSCGGGVQFSSRDCTRPVPRNGGKYCEGRRTRFRSCNTQDCP. Residues 686–839 are spacer; the sequence is SKQSGSFKKF…LRRRSWAGRK (154 aa).

Interacts with SRPX2. Zn(2+) serves as cofactor. In terms of processing, the precursor is cleaved by a furin endopeptidase. Post-translationally, glycosylated. Can be O-fucosylated by POFUT2 on a serine or a threonine residue found within the consensus sequence C1-X(2)-(S/T)-C2-G of the TSP type-1 repeat domains where C1 and C2 are the first and second cysteine residue of the repeat, respectively. Fucosylated repeats can then be further glycosylated by the addition of a beta-1,3-glucose residue by the glucosyltransferase, B3GALTL. Fucosylation mediates the efficient secretion of ADAMTS family members. Can also be C-glycosylated with one or two mannose molecules on tryptophan residues within the consensus sequence W-X-X-W of the TPRs, and N-glycosylated. These other glycosylations can also facilitate secretion.

The protein resides in the secreted. It is found in the extracellular space. Its subcellular location is the extracellular matrix. The enzyme catalyses Glutamyl endopeptidase. Bonds cleaved include 370-Thr-Glu-Gly-Glu-|-Ala-Arg-Gly-Ser-377 in the interglobular domain of mammalian aggrecan.. In terms of biological role, cleaves aggrecan, a cartilage proteoglycan, at the '392-Glu-|-Ala-393' site and may be involved in its turnover. Also cleaves COMP. May play an important role in the destruction of aggrecan in arthritic diseases. The chain is A disintegrin and metalloproteinase with thrombospondin motifs 4 (ADAMTS4) from Bos taurus (Bovine).